Consider the following 259-residue polypeptide: MRILVSNDDGVDAAGIRMLASVLREAGHEVTVVAPDRDRSGASNSLTLDLPIRLKRIDHYTVSVAGTPTDCVHLALTGLLEFEPDIVVSGINNAANLGDDVIYSGTVSAAMEGRFLGLPAVAVSLVSRNHDPKHFETAARAAVEIVARLKADPLPADTILNVNVPDLPWNEVKGFEVTRLGNRHRAEGCIAQKDPRGNEVYWIGPAGREQDSGPGTDFHAVRTGHISITPIQVDLTRYQALEKVASWVGGLSAALDQPA.

A divalent metal cation contacts are provided by Asp8, Asp9, Ser40, and Asn92.

It belongs to the SurE nucleotidase family. Requires a divalent metal cation as cofactor.

It localises to the cytoplasm. The enzyme catalyses a ribonucleoside 5'-phosphate + H2O = a ribonucleoside + phosphate. Nucleotidase that shows phosphatase activity on nucleoside 5'-monophosphates. The sequence is that of 5'-nucleotidase SurE from Stenotrophomonas maltophilia (strain R551-3).